The chain runs to 468 residues: Transcription factor ste11 (468 aa).

The disordered stretch occupies residues 1–21; that stretch reads MSASLTAEQKDQKSSVKRPLN. The segment at residues 16–80 is a DNA-binding region (HMG box); that stretch reads VKRPLNSFML…KHMLENPEYK (65 aa). Residue Thr173 is modified to Phosphothreonine. Residues Ser209, Ser211, and Ser218 each carry the phosphoserine modification. Composition is skewed to polar residues over residues 249–263 and 274–285; these read PSLE…SNCS and GTVSEQSNSDSP. A disordered region spans residues 249-290; that stretch reads PSLEANLPQNSSNCSARRVPKFDSKGTVSEQSNSDSPELSAD.

In terms of processing, phosphorylation results in inactivation.

The protein localises to the nucleus. Its subcellular location is the cytoplasm. Its function is as follows. Key transcription factor for sexual development. Activates the transcription of the matp, matm, mei2, mfm, ste6 and rgs1 genes. Binds specifically to a DNA fragment carrying a 10-base motif 5'-TTCTTTGTTY-3'. This is Transcription factor ste11 (ste11) from Schizosaccharomyces pombe (strain 972 / ATCC 24843) (Fission yeast).